The chain runs to 483 residues: V-type proton ATPase subunit H (483 aa).

Residue Ser-483 is modified to Phosphoserine.

The protein belongs to the V-ATPase H subunit family. V-ATPase is a heteromultimeric enzyme made up of two complexes: the ATP-hydrolytic V1 complex and the proton translocation V0 complex. The V1 complex consists of three catalytic AB heterodimers that form a heterohexamer, three peripheral stalks each consisting of EG heterodimers, one central rotor including subunits D and F, and the regulatory subunits C and H. The proton translocation complex V0 consists of the proton transport subunit a, a ring of proteolipid subunits c9c'', rotary subunit d, subunits e and f, and the accessory subunits ATP6AP1/Ac45 and ATP6AP2/PRR. Interacts with AP2M1. In terms of tissue distribution, expressed in brain (at protein level).

The protein resides in the cytoplasmic vesicle. The protein localises to the clathrin-coated vesicle membrane. Subunit of the V1 complex of vacuolar(H+)-ATPase (V-ATPase), a multisubunit enzyme composed of a peripheral complex (V1) that hydrolyzes ATP and a membrane integral complex (V0) that translocates protons. V-ATPase is responsible for acidifying and maintaining the pH of intracellular compartments and in some cell types, is targeted to the plasma membrane, where it is responsible for acidifying the extracellular environment. Subunit H is essential for V-ATPase activity, but not for the assembly of the complex. Involved in the endocytosis mediated by clathrin-coated pits, required for the formation of endosomes. This chain is V-type proton ATPase subunit H (ATP6V1H), found in Bos taurus (Bovine).